The following is a 514-amino-acid chain: Bifunctional lysine-specific demethylase and histidyl-hydroxylase NO66 (514 aa).

Residues 1-53 are disordered; it reads MKRGLEEEIEEMSEEEVGVNNNNNGKKKKKKVVKKSKPVPLTKSVPQVSSQPL. A compositionally biased stretch (acidic residues) spans 7–17; that stretch reads EEIEEMSEEEV. The segment covering 25–37 has biased composition (basic residues); that stretch reads GKKKKKKVVKKSK. Over residues 44–53 the composition is skewed to polar residues; the sequence is SVPQVSSQPL. The JmjC domain maps to 180 to 327; it reads CSVRLLNPQT…IGKVLNRALE (148 aa). Residues histidine 226, aspartate 228, and histidine 291 each contribute to the Fe cation site.

Belongs to the ROX family. NO66 subfamily. It depends on Fe(2+) as a cofactor.

It is found in the nucleus. It catalyses the reaction N(6),N(6)-dimethyl-L-lysyl(36)-[histone H3] + 2 2-oxoglutarate + 2 O2 = L-lysyl(36)-[histone H3] + 2 formaldehyde + 2 succinate + 2 CO2. Its function is as follows. Oxygenase that can act as both a histone lysine demethylase and a ribosomal histidine hydroxylase. Specifically demethylates 'Lys-4' (H3K4me) and 'Lys-36' (H3K36me) of histone H3, thereby playing a central role in histone code. The protein is Bifunctional lysine-specific demethylase and histidyl-hydroxylase NO66 (jcdg) of Dictyostelium discoideum (Social amoeba).